The following is a 122-amino-acid chain: Large ribosomal subunit protein uL14 (122 aa).

This sequence belongs to the universal ribosomal protein uL14 family. As to quaternary structure, part of the 50S ribosomal subunit. Forms a cluster with proteins L3 and L19. In the 70S ribosome, L14 and L19 interact and together make contacts with the 16S rRNA in bridges B5 and B8.

Its function is as follows. Binds to 23S rRNA. Forms part of two intersubunit bridges in the 70S ribosome. The chain is Large ribosomal subunit protein uL14 from Lysinibacillus sphaericus (strain C3-41).